The chain runs to 415 residues: MTTQSQGGGLLHRLAQGSLVKQILVGLVLGILLAWLSKPAAIAVGLLGTLFVGALKAVAPVLVLMLVMASIANHKHGQKTNIRPILWLYLLGTFSAALTAVLFSFLFPSTLHLVAGATDITPPTGIVGVLRDLLLSMVANPIDALLKGNYIGILVWAVGLGFALRHGNDTTKNLVNDMSDAVTFMVKLVIRFAPIGIFGLVASTLATTGFDTLWGYAQLLMVLIGCMFLVALVINPLIVFAKIRRNPYPLVFACLRESGVTAFFTRSSAANIPVNMALCEKLNLDRDTYSVSIPLGATINMAGAAITITVLTLAAVHTLGIAVDVPTALLLSVVASLCACGASGVAGGSLLLIPLACNMFGIPNDIAMQVVAVGFIIGVLQDSCETALNSSTDVLFTAAACQAEDARLASHALRN.

The next 8 helical transmembrane spans lie at 23–43 (ILVG…AAIA), 47–67 (LGTL…LMLV), 85–105 (ILWL…LFSF), 144–164 (ALLK…GFAL), 181–201 (AVTF…FGLV), 220–240 (LMVL…LIVF), 303–323 (GAAI…GIAV), and 333–353 (VVAS…LLLI).

The protein belongs to the dicarboxylate/amino acid:cation symporter (DAACS) (TC 2.A.23) family.

The protein localises to the cell inner membrane. It catalyses the reaction L-serine(in) + Na(+)(in) = L-serine(out) + Na(+)(out). It carries out the reaction L-threonine(in) + Na(+)(in) = L-threonine(out) + Na(+)(out). Functionally, involved in the import of serine and threonine into the cell, with the concomitant import of sodium (symport system). The protein is Serine/threonine transporter SstT of Cronobacter sakazakii (strain ATCC BAA-894) (Enterobacter sakazakii).